A 209-amino-acid chain; its full sequence is NADH-quinone oxidoreductase subunit C (209 aa).

Belongs to the complex I 30 kDa subunit family. NDH-1 is composed of 14 different subunits. Subunits NuoB, C, D, E, F, and G constitute the peripheral sector of the complex.

Its subcellular location is the cell inner membrane. It catalyses the reaction a quinone + NADH + 5 H(+)(in) = a quinol + NAD(+) + 4 H(+)(out). NDH-1 shuttles electrons from NADH, via FMN and iron-sulfur (Fe-S) centers, to quinones in the respiratory chain. The immediate electron acceptor for the enzyme in this species is believed to be ubiquinone. Couples the redox reaction to proton translocation (for every two electrons transferred, four hydrogen ions are translocated across the cytoplasmic membrane), and thus conserves the redox energy in a proton gradient. This Phenylobacterium zucineum (strain HLK1) protein is NADH-quinone oxidoreductase subunit C.